The sequence spans 640 residues: Threonine--tRNA ligase (640 aa).

Residues methionine 1 to threonine 59 form the TGS domain. Positions aspartate 240–proline 531 are catalytic. Positions 332, 383, and 508 each coordinate Zn(2+).

The protein belongs to the class-II aminoacyl-tRNA synthetase family. In terms of assembly, homodimer. It depends on Zn(2+) as a cofactor.

Its subcellular location is the cytoplasm. The enzyme catalyses tRNA(Thr) + L-threonine + ATP = L-threonyl-tRNA(Thr) + AMP + diphosphate + H(+). Its function is as follows. Catalyzes the attachment of threonine to tRNA(Thr) in a two-step reaction: L-threonine is first activated by ATP to form Thr-AMP and then transferred to the acceptor end of tRNA(Thr). Also edits incorrectly charged L-seryl-tRNA(Thr). The chain is Threonine--tRNA ligase from Thermotoga neapolitana (strain ATCC 49049 / DSM 4359 / NBRC 107923 / NS-E).